A 241-amino-acid chain; its full sequence is Glutathione S-transferase omega-1 (241 aa).

Residue serine 2 is modified to N-acetylserine. The GST N-terminal domain occupies 22 to 101; that stretch reads GLIRVYSMRF…YLDEAYPGKK (80 aa). Catalysis depends on cysteine 32, which acts as the Nucleophile. N6-acetyllysine is present on lysine 57. Glutathione-binding positions include lysine 59, valine 72, and 85-86; that span reads ES. The GST C-terminal domain occupies 106 to 225; that stretch reads DPYEKACQKM…HIEPRDLRAF (120 aa). N6-acetyllysine is present on residues lysine 143, lysine 148, and lysine 152.

As to quaternary structure, homodimer. In terms of tissue distribution, most abundant in the liver and skeletal muscle; also expressed in heart, diaphragm, colon, thymus, kidney, lung, ovaries, spleen, intestine and pancreas.

It localises to the cytoplasm. Its subcellular location is the cytosol. The enzyme catalyses RX + glutathione = an S-substituted glutathione + a halide anion + H(+). It carries out the reaction L-dehydroascorbate + 2 glutathione = glutathione disulfide + L-ascorbate. The catalysed reaction is methylarsonate + 2 glutathione + H(+) = methylarsonous acid + glutathione disulfide + H2O. In terms of biological role, exhibits glutathione-dependent thiol transferase and dehydroascorbate reductase activities. Has S-(phenacyl)glutathione reductase activity. Also has glutathione S-transferase activity. Participates in the biotransformation of inorganic arsenic and reduces monomethylarsonic acid (MMA) and dimethylarsonic acid. The protein is Glutathione S-transferase omega-1 (GSTO1) of Sus scrofa (Pig).